A 141-amino-acid chain; its full sequence is Putative nickel-responsive regulator (141 aa).

Ni(2+) contacts are provided by His80, His91, His93, and Cys99.

Belongs to the transcriptional regulatory CopG/NikR family. Ni(2+) is required as a cofactor.

Its function is as follows. Transcriptional regulator. This chain is Putative nickel-responsive regulator, found in Methanococcus maripaludis (strain C5 / ATCC BAA-1333).